Consider the following 362-residue polypeptide: 3-dehydroquinate synthase (362 aa).

Residues 71 to 76, 105 to 109, 129 to 130, Lys-142, Lys-151, and 169 to 172 contribute to the NAD(+) site; these read DGERYK, GVIGD, TT, and CLKT. Zn(2+)-binding residues include Glu-184, His-247, and His-264.

This sequence belongs to the sugar phosphate cyclases superfamily. Dehydroquinate synthase family. Co(2+) serves as cofactor. The cofactor is Zn(2+). Requires NAD(+) as cofactor.

It localises to the cytoplasm. It carries out the reaction 7-phospho-2-dehydro-3-deoxy-D-arabino-heptonate = 3-dehydroquinate + phosphate. The protein operates within metabolic intermediate biosynthesis; chorismate biosynthesis; chorismate from D-erythrose 4-phosphate and phosphoenolpyruvate: step 2/7. Its function is as follows. Catalyzes the conversion of 3-deoxy-D-arabino-heptulosonate 7-phosphate (DAHP) to dehydroquinate (DHQ). The chain is 3-dehydroquinate synthase from Salmonella arizonae (strain ATCC BAA-731 / CDC346-86 / RSK2980).